Here is a 458-residue protein sequence, read N- to C-terminus: tRNA modification GTPase MnmE (458 aa).

The (6S)-5-formyl-5,6,7,8-tetrahydrofolate site is built by Arg26, Glu88, and Arg127. A TrmE-type G domain is found at 224–378 (GLSTAIIGRP…IEDRINQLFF (155 aa)). Asn234 serves as a coordination point for K(+). GTP is bound by residues 234 to 239 (NVGKSS), 253 to 259 (TDIAGTT), and 278 to 281 (DTAG). A Mg(2+)-binding site is contributed by Ser238. K(+)-binding residues include Thr253, Ile255, and Thr258. Residue Thr259 coordinates Mg(2+). Lys458 serves as a coordination point for (6S)-5-formyl-5,6,7,8-tetrahydrofolate.

Belongs to the TRAFAC class TrmE-Era-EngA-EngB-Septin-like GTPase superfamily. TrmE GTPase family. As to quaternary structure, homodimer. Heterotetramer of two MnmE and two MnmG subunits. K(+) serves as cofactor.

It localises to the cytoplasm. Functionally, exhibits a very high intrinsic GTPase hydrolysis rate. Involved in the addition of a carboxymethylaminomethyl (cmnm) group at the wobble position (U34) of certain tRNAs, forming tRNA-cmnm(5)s(2)U34. The polypeptide is tRNA modification GTPase MnmE (Streptococcus pyogenes serotype M4 (strain MGAS10750)).